The sequence spans 222 residues: GTP cyclohydrolase 1 (222 aa).

3 residues coordinate Zn(2+): Cys-111, His-114, and Cys-182.

The protein belongs to the GTP cyclohydrolase I family. In terms of assembly, toroid-shaped homodecamer, composed of two pentamers of five dimers.

The catalysed reaction is GTP + H2O = 7,8-dihydroneopterin 3'-triphosphate + formate + H(+). It participates in cofactor biosynthesis; 7,8-dihydroneopterin triphosphate biosynthesis; 7,8-dihydroneopterin triphosphate from GTP: step 1/1. The protein is GTP cyclohydrolase 1 of Enterobacter sp. (strain 638).